We begin with the raw amino-acid sequence, 109 residues long: PMTDLLAAGDISKAVSAFAAPESFNHKKFFELCGLKSKSKEIMQKVFHVLDQDQSGFIEKEELCLILKGFTPEGRSLSDKETTALLAAGDKDGDGKIGVDEFVTLVSES.

EF-hand domains are found at residues 38-73 (KSKEIMQKVFHVLDQDQSGFIEKEELCLILKGFTPE) and 77-109 (LSDKETTALLAAGDKDGDGKIGVDEFVTLVSES). 11 residues coordinate Ca(2+): D51, D53, S55, F57, E59, E62, D90, D92, D94, K96, and E101.

It belongs to the parvalbumin family.

Its function is as follows. In muscle, parvalbumin is thought to be involved in relaxation after contraction. It binds two calcium ions. This Pelophylax lessonae (Pool frog) protein is Parvalbumin alpha.